Consider the following 1877-residue polypeptide: MDWDWGNRCSRPGRRDLLCVLALLAGCLLPVCRTRVYTNHWAVKIAGGFAEADRIASKYGFINVGQIGALKDYYHFYHSRTIKRSVLSSRGTHSFISMEPKVEWIQQQVVKKRTKRDYDLSHAQSTYFNDPKWPSMWYMHCSDNTHPCQSDMNIEGAWKRGYTGKNIVVTILDDGIERTHPDLMQNYDALASCDVNGNDLDPMPRYDASNENKHGTRCAGEVAATANNSHCTVGIAFNAKIGGVRMLDGDVTDMVEAKSVSYNPQHVHIYSASWGPDDDGKTVDGPAPLTRQAFENGVRMGRRGLGSVFVWASGNGGRSKDHCSCDGYTNSIYTISISSTAESGKKPWYLEECSSTLATTYSSGESYDKKIITTDLRQRCTDNHTGTSASAPMAAGIIALALEANPFLTWRDVQHVIVRTSRAGHLNANDWKTNAAGFKVSHLYGFGLMDAEAMVMEAEKWTTVPQQHVCVESTDRQIKTIRPNSAVRSIYKASGCSDNPNHHVNYLEHVVVRITITHPRRGDLAIYLTSPSGTRSQLLANRLFDHSMEGFKNWEFMTIHCWGERAAGDWVLEVYDTPSQLRNFKTPGKLKEWSLVLYGTSVQPYSPTNEFPKVERFRYSRVEDPTDDYGAEDYAGPCDPECSEVGCDGPGPDHCSDCLHYYYKLKNNTRICVSSCPPGHYHADKKRCRKCAPNCESCFGSHGNQCLSCKYGYFLNEETSSCVTQCPDGSYEDIKKNVCGKCSENCKACIGFHNCTECKGGLSLQGSRCSVTCEDGQFFNGHDCQPCHRFCATCSGAGADGCINCTEGYVMEEGRCVQSCSVSYYLDHSSEGGYKSCKRCDNSCLTCNGPGFKNCSSCPSGYLLDLGTCQMGAICKDGEYIDDQGHCQTCEASCAKCWGPTQEDCISCPVTRVLDDGRCVMNCPSWKFEFKKQCHPCHYTCQGCQGSGPSNCTSCRADKHGQERFLYHGECLENCPVGHYPAKGHACLPCPDNCELCYNPHVCSRCMSGYVIIPPNHTCQKLECRQGEFQDSEYEECMPCEEGCLGCTEDDPGACTSCATGYYMFERHCYKACPEKTFGVKWECRACGTNCGSCDQHECYWCEEGFFLSGGSCVQDCGPGFHGDQELGECKPCHRACENCTGSGYNQCSSCQEGLQLWHGTCLWSTWPQVEGKDWNEAVPTEKPSLVRSLLQDRRKWKVQIKRDATSQNQPCHSSCKTCNGSLCASCPTGMYLWLQACVPSCPQGTWPSVTSGSCEKCSEDCVSCSGADLCQQCLSQPDNTLLLHEGRCYHSCPEGFYAKDGVCEHCSSPCKTCEGNATSCNSCEGDFVLDHGVCWKTCPEKHVAVEGVCKHCPERCQDCIHEKTCKECMPDFFLYNDMCHRSCPKSFYPDMRQCVPCHKNCLECNGPKEDDCKVCADTSKALHNGLCLDECPEGTYKEEENDECRDCPESCLICSSAWTCLACREGFTVVHDVCTAPKECAAVEYWDEGSHRCQPCHKKCSRCSGPSEDQCYTCPRETFLLNTTCVKECPEGYHTDKDSQQCVLCHSSCRTCEGPHSMQCLSCRPGWFQLGKECLLQCRDGYYGESTSGRCEKCDKSCKSCRGPRPTDCQSCDTFFFLLRSKGQCHRACPEHYYADQHAQTCERCHPTCDKCSGKEAWSCLSCVWSYHLLKGICIPECIVGEYREGKGENFNCKKCHESCMECKGPGSKNCTGCSAGLLLDMDDNRCLHCCNASHSRRSQDCCDCQSSTDECILPAREAEFYEHTKTALLVTSGAMLLLLLGAAAVVWRKSRSRPVAKGRYEKLAEPTVSYSSYRSSYLDEDQVIEYRDRDYDEDDEDDIVYMGQDGTVYRKFKYGLLDETEDDELEYDDESYSYQ.

The N-terminal stretch at 1–34 (MDWDWGNRCSRPGRRDLLCVLALLAGCLLPVCRT) is a signal peptide. Residues 35–116 (RVYTNHWAVK…QQVVKKRTKR (82 aa)) constitute a propeptide that is removed on maturation. Topologically, residues 117–1768 (DYDLSHAQST…EAEFYEHTKT (1652 aa)) are extracellular. Residues 136–455 (MWYMHCSDNT…FGLMDAEAMV (320 aa)) enclose the Peptidase S8 domain. Residues Asp173 and His214 each act as charge relay system in the active site. N-linked (GlcNAc...) asparagine glycans are attached at residues Asn227 and Asn383. Ser388 acts as the Charge relay system in catalysis. The 141-residue stretch at 463–603 (TVPQQHVCVE…SLVLYGTSVQ (141 aa)) folds into the P/Homo B domain. Residues 521-523 (RGD) carry the Cell attachment site motif. 22 FU repeats span residues 632–682 (EDYA…GHYH), 685–732 (KKRC…GSYE), 736–779 (KNVC…GQFF), 781–826 (GHDC…SYYL), 834–881 (YKSC…GEYI), 884–929 (QGHC…WKFE), 931–981 (KKQC…GHYP), 984–1030 (GHAC…GEFQ), 1034–1079 (YEEC…KTFG), 1081–1123 (KWEC…GFHG), 1127–1168 (LGEC…STWP), 1206–1248 (TSQN…GTWP), 1252–1299 (SGSC…GFYA), 1301–1345 (DGVC…KHVA), 1347–1390 (EGVC…SFYP), 1392–1438 (MRQC…GTYK), 1442–1487 (NDEC…VEYW), 1491–1536 (SHRC…GYHT), 1540–1585 (SQQC…GYYG), 1589–1636 (SGRC…HYYA), 1640–1685 (AQTC…GEYR), and 1691–1738 (NFNC…SHSR). The interval 638–1753 (CDPECSEVGC…CDCQSSTDEC (1116 aa)) is CRM (Cys-rich motif). N-linked (GlcNAc...) asparagine glycosylation occurs at Asn667. N-linked (GlcNAc...) asparagine glycans are attached at residues Asn754, Asn804, and Asn854. 2 N-linked (GlcNAc...) asparagine glycosylation sites follow: Asn951 and Asn1016. A glycan (N-linked (GlcNAc...) asparagine) is linked at Asn1220. N-linked (GlcNAc...) asparagine glycosylation occurs at Asn1317. Asn1523 carries N-linked (GlcNAc...) asparagine glycosylation. N-linked (GlcNAc...) asparagine glycosylation is found at Asn1711 and Asn1733. The helical transmembrane segment at 1769 to 1789 (ALLVTSGAMLLLLLGAAAVVW) threads the bilayer. Residues 1790 to 1877 (RKSRSRPVAK…EYDDESYSYQ (88 aa)) are Cytoplasmic-facing. 2 AC regions span residues 1825–1844 (VIEY…IVYM) and 1856–1877 (YGLL…YSYQ).

The protein belongs to the peptidase S8 family. PC5A is expressed in most tissues but is most abundant in the intestine and adrenals. PC5B is expressed in the intestine, adrenals and lung but not in the brain.

Its subcellular location is the secreted. The protein localises to the endomembrane system. In terms of biological role, serine endoprotease that processes various proproteins by cleavage at paired basic amino acids, recognizing the RXXX[KR]R consensus motif. Likely functions in the constitutive and regulated secretory pathways. Plays an essential role in pregnancy establishment by proteolytic activation of a number of important factors such as BMP2, CALD1 and alpha-integrins. May be responsible for the maturation of gastrointestinal peptides. May be involved in the cellular proliferation of adrenal cortex via the activation of growth factors. The protein is Proprotein convertase subtilisin/kexin type 5 (Pcsk5) of Mus musculus (Mouse).